The chain runs to 374 residues: Alcohol dehydrogenase 3, mitochondrial (374 aa).

Residues 1–26 constitute a mitochondrion transit peptide; the sequence is MLRLTSARSIVSPLRKGAFGSIRTLA. Residues cysteine 70, histidine 93, cysteine 124, cysteine 127, cysteine 130, cysteine 138, and cysteine 180 each coordinate Zn(2+). Residues 204–210, aspartate 228, lysine 233, 295–297, and arginine 367 contribute to the NAD(+) site; these read GAAGGLG and VGL.

This sequence belongs to the zinc-containing alcohol dehydrogenase family. As to quaternary structure, homotetramer. The cofactor is Zn(2+).

The protein localises to the mitochondrion matrix. It carries out the reaction a primary alcohol + NAD(+) = an aldehyde + NADH + H(+). The catalysed reaction is a secondary alcohol + NAD(+) = a ketone + NADH + H(+). This Kluyveromyces lactis (strain ATCC 8585 / CBS 2359 / DSM 70799 / NBRC 1267 / NRRL Y-1140 / WM37) (Yeast) protein is Alcohol dehydrogenase 3, mitochondrial (ADH3).